Consider the following 540-residue polypeptide: Synaptotagmin-3 (540 aa).

Residues Gly9–Ile29 form a helical membrane-spanning segment. One can recognise an SMP-LTD domain in the interval Asp67–Leu249. Positions Gln227 to Asp509 are phospholipid binding. 2 consecutive C2 domains span residues Trp240–Leu363 and Arg401–Tyr521. Asp277, Asp283, Asp333, Asp335, and Asp341 together coordinate Ca(2+).

The protein belongs to the synaptotagmin family. Ca(2+) serves as cofactor.

Its subcellular location is the membrane. May be involved in membrane trafficking. This is Synaptotagmin-3 (SYT3) from Arabidopsis thaliana (Mouse-ear cress).